A 27-amino-acid chain; its full sequence is Defensin-like protein 1 (27 aa).

Gln1 is subject to Pyrrolidone carboxylic acid.

It belongs to the DEFL family. Forms oligomers in its native state.

In terms of biological role, possesses antifungal activity sensitive to inorganic cations. The chain is Defensin-like protein 1 from Brassica campestris (Field mustard).